Consider the following 165-residue polypeptide: Large ribosomal subunit protein uL10 (165 aa).

This sequence belongs to the universal ribosomal protein uL10 family. In terms of assembly, part of the ribosomal stalk of the 50S ribosomal subunit. The N-terminus interacts with L11 and the large rRNA to form the base of the stalk. The C-terminus forms an elongated spine to which L12 dimers bind in a sequential fashion forming a multimeric L10(L12)X complex.

Its function is as follows. Forms part of the ribosomal stalk, playing a central role in the interaction of the ribosome with GTP-bound translation factors. The protein is Large ribosomal subunit protein uL10 of Buchnera aphidicola subsp. Acyrthosiphon pisum (strain 5A).